A 366-amino-acid chain; its full sequence is MQSKRYLVLEDGSFYEGYRLGSDNLTVGEIVFNTAMTGYQETISDPSYTGQIITFTYPLIGNYGINRDDFESLVPTLNGIVVKEASAHPSNFRQQKTLHDVLELHQIPGIAGVDTRSITRKIRQHGVLKAGFTDRKEDIDQLVKHLQQVELPKNEVEIVSTKTPYVSTGKDLSVVLVDFGKKQNIVRELNVRGCNVTVVPYTTTAEEILAMAPDGVMLSNGPGNPEVVECAIPMIQGILGKIPFFGICLGHQLFALSQGASSFKMKFGHRGANHPVKNLETGKVDITSQNHGYAIDIDSLKSTDLEVTHLALNDGTVEGLKHKTLPAFSVQYHPEANPGPSDSNYLFDDFVAMMTNFKEKERHINA.

A CPSase region spans residues 1–171 (MQSKRYLVLE…KTPYVSTGKD (171 aa)). L-glutamine contacts are provided by S47, G221, and G223. Positions 173–360 (SVVLVDFGKK…VAMMTNFKEK (188 aa)) constitute a Glutamine amidotransferase type-1 domain. The active-site Nucleophile is the C248. Positions 249, 252, 290, 292, and 293 each coordinate L-glutamine. Catalysis depends on residues H333 and E335.

The protein belongs to the CarA family. Composed of two chains; the small (or glutamine) chain promotes the hydrolysis of glutamine to ammonia, which is used by the large (or ammonia) chain to synthesize carbamoyl phosphate. Tetramer of heterodimers (alpha,beta)4.

The catalysed reaction is hydrogencarbonate + L-glutamine + 2 ATP + H2O = carbamoyl phosphate + L-glutamate + 2 ADP + phosphate + 2 H(+). The enzyme catalyses L-glutamine + H2O = L-glutamate + NH4(+). It functions in the pathway amino-acid biosynthesis; L-arginine biosynthesis; carbamoyl phosphate from bicarbonate: step 1/1. Its pathway is pyrimidine metabolism; UMP biosynthesis via de novo pathway; (S)-dihydroorotate from bicarbonate: step 1/3. Its function is as follows. Small subunit of the glutamine-dependent carbamoyl phosphate synthetase (CPSase). CPSase catalyzes the formation of carbamoyl phosphate from the ammonia moiety of glutamine, carbonate, and phosphate donated by ATP, constituting the first step of 2 biosynthetic pathways, one leading to arginine and/or urea and the other to pyrimidine nucleotides. The small subunit (glutamine amidotransferase) binds and cleaves glutamine to supply the large subunit with the substrate ammonia. This chain is Carbamoyl phosphate synthase small chain, found in Staphylococcus aureus (strain COL).